Consider the following 546-residue polypeptide: Probable protein kinase UbiB (546 aa).

The region spanning 124–502 is the Protein kinase domain; sequence DFEIKPLASA…HVRQGQSRYF (379 aa). Residues 130-138 and Lys153 contribute to the ATP site; that span reads LASASIAQV. Residue Asp288 is the Proton acceptor of the active site. The next 2 helical transmembrane spans lie at 501-521 and 522-542; these read YFLG…VSRP and EWGL…FVGW.

Belongs to the ABC1 family. UbiB subfamily.

It is found in the cell inner membrane. The protein operates within cofactor biosynthesis; ubiquinone biosynthesis [regulation]. Is probably a protein kinase regulator of UbiI activity which is involved in aerobic coenzyme Q (ubiquinone) biosynthesis. This chain is Probable protein kinase UbiB, found in Shigella sonnei (strain Ss046).